The following is an 876-amino-acid chain: MSDLAREITPVNIEEELKSSYLDYAMSVIVGRALPDVRDGLKPVHRRVLYAMNVLGNDWNKAYKKSARVVGDVIGKYHPHGDTAVYDTIVRMAQPFSLRYMLVDGQGNFGSVDGDSAAAMRYTEIRMSKIAHELMADLEKETVDFVDNYDGTEKIPDVMPTKIPNLLVNGSFGIAVGMATNIPPHNLTEVINGRLAYVEDEEISIEGLMEHIPGPDFPTAAIINGRRGIEEAYRTGRGKVYICARAEVEADAKTGRETIIVHEIPYQVNKARLIEKIAELVKEKRVEGISALRDESDKDGMRIVIEVKRDAVGRVVLNNLYSQTQLQVSFGINMVALHHGQPKIMNLKEIIAAFVRHRREVVTRRTILALRKARDRADILEALSIALANIDPIIELIRRAPTPAEAKAGLIARSWDLGNVSAMLEAGDDAARPEWLEPEFGVRDGQYYLTEQQAQAILDLRLQKLTGLEHEKLLDEYKELLEQIAELLHILGSADRLMEVIREELELVREQFGDARRTDITANSVDINIEDLITQEDVVVTLSHEGYVKYQPVNDYEAQRRGGKGKSAPRIKEEDFIDRLLVANTHDTILCFSSRGRLYWMKVYQVPEASRGARGRPIVNLLPLEANERYTAILPVREYEEGVNVFMATASGTVKKTPADEFSRPRSAGIIAVNLNEGDELIGVDLTSGQDEVMLFSAAGKVVRFKEDDVRAMGRTATGVRGIKLAGEDKVVSLIVPRGEGRILTATENGYRKRTAVAEYPTKSRATQGVISIKVTERNGSVVGAVQVDDCDQIMMITDAGTLVRIRVSEVSIVGRNTQGVILIRTAEDENVVALQRVAEPVDDEELDAIDGSAAEGDEDIAPEADTDDDIAEDEE.

A Topo IIA-type catalytic domain is found at 34–532; it reads LPDVRDGLKP…NSVDINIEDL (499 aa). Y122 acts as the O-(5'-phospho-DNA)-tyrosine intermediate in catalysis. A GyrA-box motif is present at residues 559-565; sequence QRRGGKG. Residues 844–876 are disordered; the sequence is DEELDAIDGSAAEGDEDIAPEADTDDDIAEDEE. Residues 856 to 876 show a composition bias toward acidic residues; it reads EGDEDIAPEADTDDDIAEDEE.

This sequence belongs to the type II topoisomerase GyrA/ParC subunit family. Heterotetramer, composed of two GyrA and two GyrB chains. In the heterotetramer, GyrA contains the active site tyrosine that forms a transient covalent intermediate with DNA, while GyrB binds cofactors and catalyzes ATP hydrolysis.

It is found in the cytoplasm. It catalyses the reaction ATP-dependent breakage, passage and rejoining of double-stranded DNA.. Its function is as follows. A type II topoisomerase that negatively supercoils closed circular double-stranded (ds) DNA in an ATP-dependent manner to modulate DNA topology and maintain chromosomes in an underwound state. Negative supercoiling favors strand separation, and DNA replication, transcription, recombination and repair, all of which involve strand separation. Also able to catalyze the interconversion of other topological isomers of dsDNA rings, including catenanes and knotted rings. Type II topoisomerases break and join 2 DNA strands simultaneously in an ATP-dependent manner. The chain is DNA gyrase subunit A from Klebsiella oxytoca.